Reading from the N-terminus, the 172-residue chain is Adenine phosphoribosyltransferase (172 aa).

The protein belongs to the purine/pyrimidine phosphoribosyltransferase family. As to quaternary structure, homodimer.

The protein localises to the cytoplasm. It carries out the reaction AMP + diphosphate = 5-phospho-alpha-D-ribose 1-diphosphate + adenine. Its pathway is purine metabolism; AMP biosynthesis via salvage pathway; AMP from adenine: step 1/1. Catalyzes a salvage reaction resulting in the formation of AMP, that is energically less costly than de novo synthesis. This is Adenine phosphoribosyltransferase from Synechococcus sp. (strain CC9311).